The chain runs to 154 residues: 3-hydroxyacyl-[acyl-carrier-protein] dehydratase FabZ (154 aa).

His-54 is an active-site residue.

Belongs to the thioester dehydratase family. FabZ subfamily.

The protein resides in the cytoplasm. It catalyses the reaction a (3R)-hydroxyacyl-[ACP] = a (2E)-enoyl-[ACP] + H2O. Its function is as follows. Involved in unsaturated fatty acids biosynthesis. Catalyzes the dehydration of short chain beta-hydroxyacyl-ACPs and long chain saturated and unsaturated beta-hydroxyacyl-ACPs. This is 3-hydroxyacyl-[acyl-carrier-protein] dehydratase FabZ from Chlamydia caviae (strain ATCC VR-813 / DSM 19441 / 03DC25 / GPIC) (Chlamydophila caviae).